A 452-amino-acid chain; its full sequence is Ribosomal protein uS12 methylthiotransferase RimO (452 aa).

Residues 5–116 (PTIAFSHLGC…IVDVLQRTES (112 aa)) enclose the MTTase N-terminal domain. [4Fe-4S] cluster contacts are provided by Cys-14, Cys-50, Cys-79, Cys-154, Cys-158, and Cys-161. One can recognise a Radical SAM core domain in the interval 140 to 369 (TTTSAVAYLR…MATQQPIAER (230 aa)). Residues 372–438 (RAQIGRLVDV…IYDLHGEVAS (67 aa)) enclose the TRAM domain.

This sequence belongs to the methylthiotransferase family. RimO subfamily. [4Fe-4S] cluster is required as a cofactor.

The protein resides in the cytoplasm. It carries out the reaction L-aspartate(89)-[ribosomal protein uS12]-hydrogen + (sulfur carrier)-SH + AH2 + 2 S-adenosyl-L-methionine = 3-methylsulfanyl-L-aspartate(89)-[ribosomal protein uS12]-hydrogen + (sulfur carrier)-H + 5'-deoxyadenosine + L-methionine + A + S-adenosyl-L-homocysteine + 2 H(+). Functionally, catalyzes the methylthiolation of an aspartic acid residue of ribosomal protein uS12. The chain is Ribosomal protein uS12 methylthiotransferase RimO from Synechococcus sp. (strain ATCC 27144 / PCC 6301 / SAUG 1402/1) (Anacystis nidulans).